We begin with the raw amino-acid sequence, 280 residues long: Phosphatidylglycerol--prolipoprotein diacylglyceryl transferase (280 aa).

The next 4 membrane-spanning stretches (helical) occupy residues 26 to 46, 71 to 91, 106 to 126, and 132 to 152; these read LAIHWYGIAYVAGIMLGWFYA, FILWAAGGIVLGGRIGYILFY, IWNGGMSFHGGLIGTTIAMIL, and GIPVWSMFDIIAAVAPIGLLF. Residue Arg154 coordinates a 1,2-diacyl-sn-glycero-3-phospho-(1'-sn-glycerol). A run of 3 helical transmembrane segments spans residues 193-213, 217-237, and 251-271; these read GLEGLVLVVLLAIAIYVFKAL, GTVTGIFVCGYALSRIFVEFF, and WLTMGMVLSTPMFLLGLWAVL.

Belongs to the Lgt family.

It is found in the cell inner membrane. The enzyme catalyses L-cysteinyl-[prolipoprotein] + a 1,2-diacyl-sn-glycero-3-phospho-(1'-sn-glycerol) = an S-1,2-diacyl-sn-glyceryl-L-cysteinyl-[prolipoprotein] + sn-glycerol 1-phosphate + H(+). It participates in protein modification; lipoprotein biosynthesis (diacylglyceryl transfer). Catalyzes the transfer of the diacylglyceryl group from phosphatidylglycerol to the sulfhydryl group of the N-terminal cysteine of a prolipoprotein, the first step in the formation of mature lipoproteins. In Agrobacterium fabrum (strain C58 / ATCC 33970) (Agrobacterium tumefaciens (strain C58)), this protein is Phosphatidylglycerol--prolipoprotein diacylglyceryl transferase.